Reading from the N-terminus, the 210-residue chain is Large ribosomal subunit protein uL3 (210 aa).

The protein belongs to the universal ribosomal protein uL3 family. In terms of assembly, part of the 50S ribosomal subunit. Forms a cluster with proteins L14 and L19.

In terms of biological role, one of the primary rRNA binding proteins, it binds directly near the 3'-end of the 23S rRNA, where it nucleates assembly of the 50S subunit. In Geobacter sulfurreducens (strain ATCC 51573 / DSM 12127 / PCA), this protein is Large ribosomal subunit protein uL3.